We begin with the raw amino-acid sequence, 167 residues long: Translation initiation factor IF-3 (167 aa).

Belongs to the IF-3 family. Monomer.

The protein localises to the cytoplasm. Functionally, IF-3 binds to the 30S ribosomal subunit and shifts the equilibrium between 70S ribosomes and their 50S and 30S subunits in favor of the free subunits, thus enhancing the availability of 30S subunits on which protein synthesis initiation begins. This Shouchella clausii (strain KSM-K16) (Alkalihalobacillus clausii) protein is Translation initiation factor IF-3.